The following is a 1185-amino-acid chain: MADGGEREELLSPSPVSPAKRQCSWPSPQAHHPRGSPGAAGGGAGGVGSSCLVLGARPHLQPDSLLDCAAKTVAEKWAYERVEERFERIPEPVQRRIVYWSFPRNEREICMYSSFQYRGGPGAGAAGGAAGASPAEEGPQPPPGAAAPAGSAPGGVAAGASPGLGAGAGAAGCGGEGLPFRRGIRLLDSGSVENVLQVGFHLSGTVTELATASEPAVTYKVAISFDRCKITSVTCGCGNKDIFYCAHVVALSLYRIRKPDQVKLRLPISETLFQMNRDQLQKFIQYLITAHHTEVLPTAQKLADEILSSNSEINQVNGAPDPTAGASIDDENCWHLDEEQVKEQVKLFLSQGGYCGSGKQLNSMFAKVREMLRMRDSNGARMLTLITEQFVADPRLTLWRQQGTNMTDKCRQLWDELGALWVCIILNPHCKLEEKSCWLQQLQKWSDLDVCPLEDGNYGHELPNITNALPQSAIHSPDSLSRPRRTVFTRAIEGRELHWQDSHLQRIISSDVYTAPACQRESERLLFNSQGQPLWLEHVPTACARVDALRSHGYPKEALRLTVAIINTLRLQQQRQLEIYKHQKKELLQRGTTTITNLEGWVGHPLDPIDCLFLTLTEACRLNDDGYLEMSDMNESRPPVYQHVPVAAGSPNSSESYLSLALEVALMGLGQQRLMPEGLYAQDKVCRNEEQLLSQLQELQLDDELVQTLQKQCILLLEGGPFSGLGEVIHRESVPMHTFAKYLFSALLPHDPDLSYKLALRAMRLPVLENSASAGDTSHPHHMVSVVPSRYPRWFTLGHLESQQCELASTMLTAAKGDTLRLRTILEAIQKHIHSSSLIFKLAQDAFKIATPTDSSTDSTLLNVALELGLQVMRMTLSTLNWRRREMVRWLVTCATEVGVRALVSILQSWYTLFTPTEATSIVAATAVSHTTILRLSLDYPQREELASCARTLALQCAMKDPQSCALSALTLCEKDHIAFEAAYQIAIDAAAGGMTHSQLFTIARYMELRGYPLRAFKLASLAMSHLNLAYNQDTHPAINDVLWACALSHSLGKNELAALIPLVVKSVHCATVLSDILRRCTVTAPGLAGIPGRRSSGKLMSTDKAPLRQLLDATINAYINTTHSRLTHISPRHYGEFIEFLSKARETFLLPQDGHLQFAQFIDNLKQIYKGKKKLMLLVRERFG.

The span at Met-1–Leu-10 shows a compositional bias: basic and acidic residues. Disordered stretches follow at residues Met-1–Gly-45 and Ala-123–Pro-153. An SWIM-type zinc finger spans residues Tyr-219–Ile-256.

The chain is Zinc finger SWIM domain-containing protein 5 (ZSWIM5) from Homo sapiens (Human).